Consider the following 370-residue polypeptide: 2-Hydroxyacid oxidase 1 (370 aa).

The FMN hydroxy acid dehydrogenase domain maps to 1-365 (MLPRLICIND…DKTLVRKNPL (365 aa)). Tyr26 contributes to the glyoxylate binding site. Residues 79–81 (ATA), Ser108, and Gln130 contribute to the FMN site. A glyoxylate-binding site is contributed by Tyr132. Thr158 serves as a coordination point for FMN. Residue Arg167 participates in glyoxylate binding. Lys184 is modified (N6-succinyllysine). Residues Ser194 and Ser230 each carry the phosphoserine modification. The FMN site is built by Lys236 and Ser258. Glyoxylate is bound by residues His260 and Arg263. Residue His260 is the Proton acceptor of the active site. FMN is bound by residues 291-295 (DGGVR) and 314-315 (GR). Positions 368–370 (SKI) match the Microbody targeting signal motif.

The protein belongs to the FMN-dependent alpha-hydroxy acid dehydrogenase family. In terms of assembly, homotetramer. The cofactor is FMN. In terms of tissue distribution, highly expressed in liver.

The protein resides in the peroxisome matrix. The enzyme catalyses a (2S)-2-hydroxycarboxylate + O2 = a 2-oxocarboxylate + H2O2. It catalyses the reaction glycolate + O2 = glyoxylate + H2O2. It carries out the reaction glyoxylate + O2 + H2O = oxalate + H2O2 + H(+). The catalysed reaction is 2-hydroxyhexadecanoate + O2 = 2-oxohexadecanoate + H2O2. The enzyme catalyses 2-hydroxyoctanoate + O2 = 2-oxooctanoate + H2O2. It functions in the pathway amino-acid biosynthesis; glycine biosynthesis. Its activity is regulated as follows. Inhibited by its product oxalate. Inhibited by high concentrations of dichlorophenolindophenol (DCIP) in vitro. Functionally, broad substrate specificity (S)-2-hydroxy-acid oxidase that preferentially oxidizes glycolate. The glyoxylate produced by the oxidation of glycolate can then be utilized by alanine-glyoxylate aminotransferase for the peroxisomal synthesis of glycine; this pathway appears to be an important step for the detoxification of glyoxylate which, if allowed to accumulate, may be metabolized to oxalate with formation of kidney stones. Can also catalyze the oxidation of glyoxylate, and long chain hydroxyacids such as 2-hydroxyhexadecanoate and 2-hydroxyoctanoate, albeit with much lower catalytic efficiency. Active in vitro with the artificial electron acceptor 2,6-dichlorophenolindophenol (DCIP), but O2 is believed to be the physiological electron acceptor, leading to the production of H2O2. Is not active on L-lactate and 2-hydroxybutanoate. The protein is 2-Hydroxyacid oxidase 1 of Homo sapiens (Human).